Reading from the N-terminus, the 473-residue chain is Photosystem II CP43 reaction center protein (473 aa).

Positions 1 to 14 (MKTLYSLRRFYPVE) are excised as a propeptide. An N-acetylthreonine modification is found at Thr-15. At Thr-15 the chain carries Phosphothreonine. 5 helical membrane-spanning segments follow: residues 69–93 (LFEVAHFVPEKPMYEQGLILLPHLA), 134–155 (LLGPETLEESFPFFGYVWKDRN), 178–200 (KALYFGGVYDTWAPGGGDVRKIT), 255–275 (KPFAWARRALVWSGEAYLSYS), and 291–312 (WFNNTAYPSEFYGPTGPEASQA). [CaMn4O5] cluster is bound at residue Glu-367. A helical transmembrane segment spans residues 447-471 (RARAAAAGFEKGIDRDFEPVLSMTP).

This sequence belongs to the PsbB/PsbC family. PsbC subfamily. PSII is composed of 1 copy each of membrane proteins PsbA, PsbB, PsbC, PsbD, PsbE, PsbF, PsbH, PsbI, PsbJ, PsbK, PsbL, PsbM, PsbT, PsbX, PsbY, PsbZ, Psb30/Ycf12, at least 3 peripheral proteins of the oxygen-evolving complex and a large number of cofactors. It forms dimeric complexes. Binds multiple chlorophylls and provides some of the ligands for the Ca-4Mn-5O cluster of the oxygen-evolving complex. It may also provide a ligand for a Cl- that is required for oxygen evolution. PSII binds additional chlorophylls, carotenoids and specific lipids. serves as cofactor.

It localises to the plastid. Its subcellular location is the chloroplast thylakoid membrane. Functionally, one of the components of the core complex of photosystem II (PSII). It binds chlorophyll and helps catalyze the primary light-induced photochemical processes of PSII. PSII is a light-driven water:plastoquinone oxidoreductase, using light energy to abstract electrons from H(2)O, generating O(2) and a proton gradient subsequently used for ATP formation. This chain is Photosystem II CP43 reaction center protein, found in Eucalyptus globulus subsp. globulus (Tasmanian blue gum).